The sequence spans 381 residues: Cytochrome b (381 aa).

Transmembrane regions (helical) follow at residues 33–53 (FGSL…FLAM), 77–98 (WLIR…FLHV), 113–133 (WNIG…GYVL), and 178–198 (FFAF…VHLL). The heme b site is built by His83 and His97. Residues His182 and His196 each coordinate heme b. His201 contributes to the a ubiquinone binding site. Transmembrane regions (helical) follow at residues 226–246 (IKDA…ALFS), 288–308 (LGGV…PLLH), 320–340 (VSQT…WIGG), and 347–367 (FIII…VLMP).

Belongs to the cytochrome b family. In terms of assembly, the cytochrome bc1 complex contains 11 subunits: 3 respiratory subunits (MT-CYB, CYC1 and UQCRFS1), 2 core proteins (UQCRC1 and UQCRC2) and 6 low-molecular weight proteins (UQCRH/QCR6, UQCRB/QCR7, UQCRQ/QCR8, UQCR10/QCR9, UQCR11/QCR10 and a cleavage product of UQCRFS1). This cytochrome bc1 complex then forms a dimer. The cofactor is heme b.

It is found in the mitochondrion inner membrane. In terms of biological role, component of the ubiquinol-cytochrome c reductase complex (complex III or cytochrome b-c1 complex) that is part of the mitochondrial respiratory chain. The b-c1 complex mediates electron transfer from ubiquinol to cytochrome c. Contributes to the generation of a proton gradient across the mitochondrial membrane that is then used for ATP synthesis. The polypeptide is Cytochrome b (MT-CYB) (Ningaui yvonnae (Southern ningaui)).